The following is a 117-amino-acid chain: Acylphosphatase (117 aa).

One can recognise an Acylphosphatase-like domain in the interval 31–117 (RWRWIIQGQV…RGDDWFEVRY (87 aa)). Residues arginine 46 and asparagine 64 contribute to the active site.

The protein belongs to the acylphosphatase family.

It catalyses the reaction an acyl phosphate + H2O = a carboxylate + phosphate + H(+). The protein is Acylphosphatase (acyP) of Synechococcus sp. (strain CC9902).